Consider the following 436-residue polypeptide: GTPase Der (436 aa).

EngA-type G domains follow at residues 4–167 (PIVA…PDEA) and 175–351 (IRFS…DNHR). Residues 10-17 (GRPNVGKS), 57-61 (DTGGI), 119-122 (NKVD), 181-188 (GRPNVGKS), 229-233 (DTAGM), and 294-297 (NKWD) contribute to the GTP site. The 85-residue stretch at 352–436 (KRITSSTLND…PIKLIVRARK (85 aa)) folds into the KH-like domain.

It belongs to the TRAFAC class TrmE-Era-EngA-EngB-Septin-like GTPase superfamily. EngA (Der) GTPase family. As to quaternary structure, associates with the 50S ribosomal subunit.

In terms of biological role, GTPase that plays an essential role in the late steps of ribosome biogenesis. The polypeptide is GTPase Der (Leuconostoc mesenteroides subsp. mesenteroides (strain ATCC 8293 / DSM 20343 / BCRC 11652 / CCM 1803 / JCM 6124 / NCDO 523 / NBRC 100496 / NCIMB 8023 / NCTC 12954 / NRRL B-1118 / 37Y)).